The following is a 100-amino-acid chain: Protein translation factor SUI1 homolog (100 aa).

It belongs to the SUI1 family.

The sequence is that of Protein translation factor SUI1 homolog from Sulfurisphaera tokodaii (strain DSM 16993 / JCM 10545 / NBRC 100140 / 7) (Sulfolobus tokodaii).